A 651-amino-acid polypeptide reads, in one-letter code: Beta-glucuronidase (651 aa).

The first 22 residues, 1–22 (MSRGPAGAWVALGPLLWTCGLA), serve as a signal peptide directing secretion. N-linked (GlcNAc...) asparagine glycosylation is found at N172 and N419. E450 functions as the Proton donor in the catalytic mechanism. A glycan (N-linked (GlcNAc...) asparagine) is linked at N630.

Belongs to the glycosyl hydrolase 2 family. In terms of assembly, homotetramer.

Its subcellular location is the lysosome. It carries out the reaction a beta-D-glucuronoside + H2O = D-glucuronate + an alcohol. Inhibited by L-aspartic acid. Plays an important role in the degradation of dermatan and keratan sulfates. This chain is Beta-glucuronidase (GUSB), found in Canis lupus familiaris (Dog).